A 785-amino-acid chain; its full sequence is Endonuclease MutS2 (785 aa).

331-338 (GPNTGGKT) provides a ligand contact to ATP. Residues 710 to 785 (LDLRGLYADE…GLGVTVVELA (76 aa)) form the Smr domain.

The protein belongs to the DNA mismatch repair MutS family. MutS2 subfamily. As to quaternary structure, homodimer. Binds to stalled ribosomes, contacting rRNA.

Its function is as follows. Endonuclease that is involved in the suppression of homologous recombination and thus may have a key role in the control of bacterial genetic diversity. In terms of biological role, acts as a ribosome collision sensor, splitting the ribosome into its 2 subunits. Detects stalled/collided 70S ribosomes which it binds and splits by an ATP-hydrolysis driven conformational change. Acts upstream of the ribosome quality control system (RQC), a ribosome-associated complex that mediates the extraction of incompletely synthesized nascent chains from stalled ribosomes and their subsequent degradation. Probably generates substrates for RQC. The chain is Endonuclease MutS2 from Pelotomaculum thermopropionicum (strain DSM 13744 / JCM 10971 / SI).